Reading from the N-terminus, the 527-residue chain is Succinate-semialdehyde dehydrogenase, mitochondrial (527 aa).

Residues 1–35 constitute a mitochondrion transit peptide; that stretch reads MAMAMAMRRAAALGARHILAASSTSSSGVLLRRHM. Residues arginine 208, 223–226, and 276–281 each bind NAD(+); these read KPSE and GSTAVG. Residue arginine 208 coordinates substrate. Catalysis depends on glutamate 298, which acts as the Proton acceptor. Residues arginine 326, cysteine 332, and serine 489 each coordinate substrate. Cysteine 332 serves as the catalytic Nucleophile. Cysteine 332 and cysteine 334 form a disulfide bridge.

This sequence belongs to the aldehyde dehydrogenase family. Homotetramer.

It localises to the mitochondrion matrix. The enzyme catalyses succinate semialdehyde + NAD(+) + H2O = succinate + NADH + 2 H(+). It participates in amino-acid degradation; 4-aminobutanoate degradation. Its activity is regulated as follows. Redox-regulated. Inhibited under oxydizing conditions. In terms of biological role, oxidizes specifically succinate semialdehyde. Involved in plant response to environmental stress by preventing the accumulation of reactive oxygen species. The polypeptide is Succinate-semialdehyde dehydrogenase, mitochondrial (ALDH5F1) (Oryza sativa subsp. japonica (Rice)).